Consider the following 171-residue polypeptide: Ribosome-binding factor A (171 aa).

Residues 120–132 (AALAAAAQPAGDP) are compositionally biased toward low complexity. The disordered stretch occupies residues 120 to 171 (AALAAAAQPAGDPDPYKKPVDHTDDWDEDDEDDRDGDDAVDALDAAADVPRL). The span at 133–142 (DPYKKPVDHT) shows a compositional bias: basic and acidic residues. A compositionally biased stretch (acidic residues) spans 143 to 160 (DDWDEDDEDDRDGDDAVD). Residues 161 to 171 (ALDAAADVPRL) are compositionally biased toward low complexity.

It belongs to the RbfA family. In terms of assembly, monomer. Binds 30S ribosomal subunits, but not 50S ribosomal subunits or 70S ribosomes.

The protein resides in the cytoplasm. One of several proteins that assist in the late maturation steps of the functional core of the 30S ribosomal subunit. Associates with free 30S ribosomal subunits (but not with 30S subunits that are part of 70S ribosomes or polysomes). Required for efficient processing of 16S rRNA. May interact with the 5'-terminal helix region of 16S rRNA. This is Ribosome-binding factor A from Kineococcus radiotolerans (strain ATCC BAA-149 / DSM 14245 / SRS30216).